The sequence spans 865 residues: Alanine--tRNA ligase (865 aa).

H552, H556, C654, and H658 together coordinate Zn(2+).

It belongs to the class-II aminoacyl-tRNA synthetase family. The cofactor is Zn(2+).

It localises to the cytoplasm. The catalysed reaction is tRNA(Ala) + L-alanine + ATP = L-alanyl-tRNA(Ala) + AMP + diphosphate. Its function is as follows. Catalyzes the attachment of alanine to tRNA(Ala) in a two-step reaction: alanine is first activated by ATP to form Ala-AMP and then transferred to the acceptor end of tRNA(Ala). Also edits incorrectly charged Ser-tRNA(Ala) and Gly-tRNA(Ala) via its editing domain. The sequence is that of Alanine--tRNA ligase from Coxiella burnetii (strain Dugway 5J108-111).